The sequence spans 162 residues: Photosystem II extrinsic protein V (162 aa).

Positions 1–26 (MLKRYMLLAVATVFFAFQVLTSTATA) are cleaved as a signal peptide. Positions 62, 65, 66, and 117 each coordinate heme c.

The protein belongs to the cytochrome c family. PsbV subfamily. PSII is composed of 1 copy each of membrane proteins PsbA, PsbB, PsbC, PsbD, PsbE, PsbF, PsbH, PsbI, PsbJ, PsbK, PsbL, PsbM, PsbT, PsbX, PsbY, PsbZ, Psb30/Ycf12, peripheral proteins PsbO, CyanoQ (PsbQ), PsbU, PsbV and a large number of cofactors. It forms dimeric complexes. Heme c serves as cofactor.

The protein localises to the cellular thylakoid membrane. One of the extrinsic, lumenal subunits of photosystem II (PSII). PSII is a light-driven water plastoquinone oxidoreductase, using light energy to abstract electrons from H(2)O, generating a proton gradient subsequently used for ATP formation. The extrinsic proteins stabilize the structure of photosystem II oxygen-evolving complex (OEC), the ion environment of oxygen evolution and protect the OEC against heat-induced inactivation. Low-potential cytochrome c that plays a role in the OEC of PSII. This Acaryochloris marina (strain MBIC 11017) protein is Photosystem II extrinsic protein V.